A 396-amino-acid polypeptide reads, in one-letter code: Elongation factor Tu (396 aa).

Residues 10–206 (KPHINVGTIG…ALDSYIPEPQ (197 aa)) form the tr-type G domain. A G1 region spans residues 19-26 (GHVDHGKT). 19–26 (GHVDHGKT) lines the GTP pocket. Threonine 26 lines the Mg(2+) pocket. Positions 60-64 (GITIN) are G2. The interval 81 to 84 (DCPG) is G3. GTP is bound by residues 81-85 (DCPGH) and 136-139 (NKAD). Positions 136-139 (NKAD) are G4. A G5 region spans residues 174 to 176 (SAL).

The protein belongs to the TRAFAC class translation factor GTPase superfamily. Classic translation factor GTPase family. EF-Tu/EF-1A subfamily. In terms of assembly, monomer.

It localises to the cytoplasm. It catalyses the reaction GTP + H2O = GDP + phosphate + H(+). Its function is as follows. GTP hydrolase that promotes the GTP-dependent binding of aminoacyl-tRNA to the A-site of ribosomes during protein biosynthesis. In Nitrosospira multiformis (strain ATCC 25196 / NCIMB 11849 / C 71), this protein is Elongation factor Tu.